The primary structure comprises 59 residues: Small, acid-soluble spore protein H 2 (59 aa).

Belongs to the SspH family.

Its subcellular location is the spore core. The chain is Small, acid-soluble spore protein H 2 from Geobacillus kaustophilus (strain HTA426).